A 944-amino-acid chain; its full sequence is MSDYKSTLNLPETGFPMRGDLAKREPGMLARWTDDDLYGIIRAAKKGKKTFILHDGPPYANGSIHIGHSVNKILKDIIVKSKGLSGFDSPYVPGWDCHGLPIELKVEQEFGKPGEKFTAAEFRAKCREYAATQVDGQRKDFIRLGVLGDWSHPYLTMDFKTEANIIRALGRIIKNGHLHKGAKPVHWCVDCRSALAEAEVEYYDKTSPSIDVAFRAVDQDAVKAKFGLPGVSGPVSLVIWTTTPWTLPANRAISLAPDFDYALVQIDGQAVILAKDLVESVMQRIGAAEYTILGTVKGAELELLRFTHPFMGFDVPAILGDHVTLDAGTGAVHTAPGHGPDDYVIGQKYGLETANPVGPDGTYLPGTYPTLDGVNVFKANDIVIELLKEKGALLHVEKMQHSYPCCWRHKTPIIFRATPQWFVSMDKEGLRQQSLKEIKGVQWIPDWGQARIESMVANRPDWCISRQRTWGVPMSLFVHKETQELLPIERTLAAMEEVAKRVEVDGIQAWWDLDPKEILGEDADQYEKVPDTLDVWFDSGSTSYSVVDARPEFAGHAADMYLEGSDQHRGWFMSSLMISVAMKGKAPYRQVLTHGFTVDGQGRKMSKSIGNTVSPQDVMNKLGADILRLWVASTDYTGEMAVSDEILKRAADSYRRIRNTARFLLANLNGFNPATDMVKPEEMVVLDRWAVGCAKTAQQEILKAYEAYDFHEVVQRLMRFCSVEMGSFYLDIIKDRQYTAKADSVARRSCQTALYHIAEALVRWMAPIMSFTADEIWGYLPGEREKYVFTGEWYDGLFGLEENEEFNDAFWDDVRYIKDQVNKELENQKANGIKSNLEAKVTLKYADDANGTIKKLKLLGEEVRFIFITSQFVISEQAGGIDDENIQYNAGNTTVQAVVTRAEGDKCPRCWHYTTDVGKVAEHADICGRCVSNIAGNGEQRKFA.

Residues 58-68 carry the 'HIGH' region motif; that stretch reads PYANGSIHIGH. Glu-563 serves as a coordination point for L-isoleucyl-5'-AMP. Positions 604-608 match the 'KMSKS' region motif; it reads KMSKS. Lys-607 is a binding site for ATP. Zn(2+)-binding residues include Cys-907, Cys-910, Cys-927, and Cys-930.

It belongs to the class-I aminoacyl-tRNA synthetase family. IleS type 1 subfamily. In terms of assembly, monomer. Zn(2+) serves as cofactor.

The protein localises to the cytoplasm. It carries out the reaction tRNA(Ile) + L-isoleucine + ATP = L-isoleucyl-tRNA(Ile) + AMP + diphosphate. In terms of biological role, catalyzes the attachment of isoleucine to tRNA(Ile). As IleRS can inadvertently accommodate and process structurally similar amino acids such as valine, to avoid such errors it has two additional distinct tRNA(Ile)-dependent editing activities. One activity is designated as 'pretransfer' editing and involves the hydrolysis of activated Val-AMP. The other activity is designated 'posttransfer' editing and involves deacylation of mischarged Val-tRNA(Ile). The sequence is that of Isoleucine--tRNA ligase from Salmonella typhimurium (strain LT2 / SGSC1412 / ATCC 700720).